A 60-amino-acid chain; its full sequence is MSDSQHFSRYEKARIIGARALQVAYGAPVLVDTDQTEPILIAAEEYDADALPFTVRREGT.

The protein belongs to the archaeal Rpo6/eukaryotic RPB6 RNA polymerase subunit family. In terms of assembly, part of the RNA polymerase complex.

Its subcellular location is the cytoplasm. It catalyses the reaction RNA(n) + a ribonucleoside 5'-triphosphate = RNA(n+1) + diphosphate. In terms of biological role, DNA-dependent RNA polymerase (RNAP) catalyzes the transcription of DNA into RNA using the four ribonucleoside triphosphates as substrates. The sequence is that of DNA-directed RNA polymerase subunit Rpo6 from Halobacterium salinarum (strain ATCC 700922 / JCM 11081 / NRC-1) (Halobacterium halobium).